The primary structure comprises 286 residues: Bifunctional protein FolD (286 aa).

NADP(+) is bound by residues 166 to 168 (GQS), serine 191, and isoleucine 232.

Belongs to the tetrahydrofolate dehydrogenase/cyclohydrolase family. Homodimer.

The enzyme catalyses (6R)-5,10-methylene-5,6,7,8-tetrahydrofolate + NADP(+) = (6R)-5,10-methenyltetrahydrofolate + NADPH. It carries out the reaction (6R)-5,10-methenyltetrahydrofolate + H2O = (6R)-10-formyltetrahydrofolate + H(+). It participates in one-carbon metabolism; tetrahydrofolate interconversion. In terms of biological role, catalyzes the oxidation of 5,10-methylenetetrahydrofolate to 5,10-methenyltetrahydrofolate and then the hydrolysis of 5,10-methenyltetrahydrofolate to 10-formyltetrahydrofolate. This Alkalilimnicola ehrlichii (strain ATCC BAA-1101 / DSM 17681 / MLHE-1) protein is Bifunctional protein FolD.